A 233-amino-acid chain; its full sequence is tRNA (guanine-N(7)-)-methyltransferase (233 aa).

Positions 65, 90, 117, and 139 each coordinate S-adenosyl-L-methionine. The active site involves D139. Residues K143, D175, and 212-215 (TRYE) each bind substrate.

This sequence belongs to the class I-like SAM-binding methyltransferase superfamily. TrmB family.

It carries out the reaction guanosine(46) in tRNA + S-adenosyl-L-methionine = N(7)-methylguanosine(46) in tRNA + S-adenosyl-L-homocysteine. It functions in the pathway tRNA modification; N(7)-methylguanine-tRNA biosynthesis. Functionally, catalyzes the formation of N(7)-methylguanine at position 46 (m7G46) in tRNA. This chain is tRNA (guanine-N(7)-)-methyltransferase, found in Roseobacter denitrificans (strain ATCC 33942 / OCh 114) (Erythrobacter sp. (strain OCh 114)).